Here is a 185-residue protein sequence, read N- to C-terminus: Ribosome-recycling factor (185 aa).

Belongs to the RRF family.

The protein resides in the cytoplasm. Its function is as follows. Responsible for the release of ribosomes from messenger RNA at the termination of protein biosynthesis. May increase the efficiency of translation by recycling ribosomes from one round of translation to another. This Enterococcus faecalis (strain ATCC 700802 / V583) protein is Ribosome-recycling factor.